The chain runs to 890 residues: DNA mismatch repair protein MutS (890 aa).

645–652 (GPNMAGKS) provides a ligand contact to ATP.

This sequence belongs to the DNA mismatch repair MutS family.

Functionally, this protein is involved in the repair of mismatches in DNA. It is possible that it carries out the mismatch recognition step. This protein has a weak ATPase activity. The sequence is that of DNA mismatch repair protein MutS from Rickettsia africae (strain ESF-5).